Here is a 468-residue protein sequence, read N- to C-terminus: MTQQIGVVGLAVMGKNLAWNIESRGYSVSVYNRSRQKTDEMVKESPGREIYPTYSLEEFVESLEKPRKILLMVKAGPATDATIDGLLPLLDDDDILIDGGNTNYQDTIRRNKALAESSINFIGMGVSGGEIGALTGPSLMPGGQKDAYNKVSDILDAIAAKAQDGASCVTYIGPNGAGHYVKMVHNGIEYADMQLIAESYAMMKDLLGMSHKEISQTFKEWNAGELESYLIEITGDIFNKLDDDNEALVEKILDTAGQKGTGKWTSINALELGVPLTIITESVFARFISSIKEERVTASKSLKGPKAHFEGDKKTFLEKIRKALYMSKICSYAQGFAQMRKASEDNEWNLKLGELAMIWREGCIIRAQFLQKIKDAYDNNENLQNLLLDPYFKNIVMEYQDALREVVATSVYNGVPTPGFSASINYYDSYRSEDLPANLIQAQRDYFGAHTYERKDREGIFHTQWVEE.

NADP(+)-binding positions include 9–14, 32–34, 73–75, and N101; these read GLAVMG, NRS, and VKA. Substrate-binding positions include N101 and 127 to 129; that span reads SGG. K182 serves as the catalytic Proton acceptor. 185–186 serves as a coordination point for substrate; that stretch reads HN. Catalysis depends on E189, which acts as the Proton donor. The substrate site is built by Y190, K259, R286, R444, and H450.

Belongs to the 6-phosphogluconate dehydrogenase family. As to quaternary structure, homodimer.

The catalysed reaction is 6-phospho-D-gluconate + NADP(+) = D-ribulose 5-phosphate + CO2 + NADPH. It functions in the pathway carbohydrate degradation; pentose phosphate pathway; D-ribulose 5-phosphate from D-glucose 6-phosphate (oxidative stage): step 3/3. Its function is as follows. Catalyzes the oxidative decarboxylation of 6-phosphogluconate to ribulose 5-phosphate and CO(2), with concomitant reduction of NADP to NADPH. This is 6-phosphogluconate dehydrogenase, decarboxylating (gnd) from Staphylococcus epidermidis (strain ATCC 35984 / DSM 28319 / BCRC 17069 / CCUG 31568 / BM 3577 / RP62A).